A 612-amino-acid polypeptide reads, in one-letter code: Phosphopentomutase (612 aa).

Alanine 2 is modified (N-acetylalanine). Alpha-D-glucose 1,6-bisphosphate-binding residues include arginine 63 and serine 165. Serine 165 acts as the Phosphoserine intermediate in catalysis. 4 residues coordinate Mg(2+): serine 165, aspartate 322, aspartate 324, and aspartate 326. The residue at position 165 (serine 165) is a Phosphoserine. Residues aspartate 326, arginine 327, threonine 400, glutamate 424, and lysine 438 each coordinate alpha-D-glucose 1,6-bisphosphate.

The protein belongs to the phosphohexose mutase family. Monomer. Mg(2+) is required as a cofactor.

It localises to the cytoplasm. Its subcellular location is the cytosol. It catalyses the reaction alpha-D-ribose 1-phosphate = D-ribose 5-phosphate. The catalysed reaction is 2-deoxy-alpha-D-ribose 1-phosphate = 2-deoxy-D-ribose 5-phosphate. It carries out the reaction alpha-D-glucose 1-phosphate = alpha-D-glucose 6-phosphate. The enzyme catalyses O-phospho-L-seryl-[protein] + alpha-D-glucose 1-phosphate = alpha-D-glucose 1,6-bisphosphate + L-seryl-[protein]. It catalyses the reaction alpha-D-glucose 1,6-bisphosphate + L-seryl-[protein] = O-phospho-L-seryl-[protein] + alpha-D-glucose 6-phosphate. With respect to regulation, the phosphomutase activity is stimulated by glucose 1,6-bisphosphate. Catalyzes the conversion of the nucleoside breakdown products ribose-1-phosphate and deoxyribose-1-phosphate to the corresponding 5-phosphopentoses. Catalyzes the reversible isomerization of alpha-D-glucose 1-phosphate to alpha-D-glucose 6-phosphate but with a lower catalytic efficiency. The mechanism proceeds via the intermediate compound alpha-D-glucose 1,6-bisphosphate. In vitro, also has a low glucose 1,6-bisphosphate synthase activity which is most probably not physiologically relevant. This is Phosphopentomutase from Homo sapiens (Human).